A 117-amino-acid polypeptide reads, in one-letter code: Large ribosomal subunit protein uL18 (117 aa).

This sequence belongs to the universal ribosomal protein uL18 family. As to quaternary structure, part of the 50S ribosomal subunit; part of the 5S rRNA/L5/L18/L25 subcomplex. Contacts the 5S and 23S rRNAs.

Functionally, this is one of the proteins that bind and probably mediate the attachment of the 5S RNA into the large ribosomal subunit, where it forms part of the central protuberance. This Vibrio vulnificus (strain CMCP6) protein is Large ribosomal subunit protein uL18.